We begin with the raw amino-acid sequence, 339 residues long: mRNA cap guanine-N(7) methyltransferase 2 (339 aa).

An mRNA cap 0 methyltransferase domain is found at 1–277 (MAVTPHHRLY…LYSTFVFQKP (277 aa)). S-adenosyl-L-methionine contacts are provided by residues K14, D54, and 82–83 (DP). Positions 314–339 (VSRTDILPPADNEKGILGPGPADMRL) are disordered.

The protein belongs to the class I-like SAM-binding methyltransferase superfamily. mRNA cap 0 methyltransferase family.

It localises to the nucleus. The enzyme catalyses a 5'-end (5'-triphosphoguanosine)-ribonucleoside in mRNA + S-adenosyl-L-methionine = a 5'-end (N(7)-methyl 5'-triphosphoguanosine)-ribonucleoside in mRNA + S-adenosyl-L-homocysteine. MRNA-capping methyltransferase that methylates the N7 position of the added guanosine to the 5'-cap structure of mRNAs. Binds RNA containing 5'-terminal GpppC. This chain is mRNA cap guanine-N(7) methyltransferase 2, found in Oryza sativa subsp. japonica (Rice).